Reading from the N-terminus, the 375-residue chain is Glutaconyl-CoA decarboxylase subunit beta (375 aa).

A run of 11 helical transmembrane segments spans residues 16–39, 46–65, 74–96, 107–130, 137–153, 160–178, 208–232, 254–271, 284–302, 316–332, and 345–369; these read GFVAFTWGNAVMMLVGCILLYLAI, LLLSPIAFGCILANVPRTGF, LILGGIKYEIFPPLIFMGVGAMT, TLLLGAAAQIGVFVALLGAMLLGF, AIGIIGGADGPTSIYLA, LLGAIAVAAYSYMSLVPLI, VVFPIVTTIFISLLLPSVCSLIGML, ALMNSVTIMLATGTGLTM, IICLGLVAFIGGTAGGVLF, PLIGSAGVSAVPMAARV, and FLLMHAMGPNVAGVIGTAVAAGTML.

It belongs to the GcdB/MmdB/OadB family. As to quaternary structure, heterooctamer consisting of two alpha, two beta, two gamma and two delta subunits. The N-terminus is blocked.

Its subcellular location is the cell membrane. The enzyme catalyses (2E)-glutaconyl-CoA + Na(+)(in) + H(+) = (2E)-butenoyl-CoA + Na(+)(out) + CO2. The protein operates within amino-acid degradation; L-glutamate degradation via hydroxyglutarate pathway; crotonoyl-CoA from L-glutamate: step 5/5. In terms of biological role, tunnel subunit of the primary sodium pump glutaconyl-CoA decarboxylase (GCD). This chain is Glutaconyl-CoA decarboxylase subunit beta (gcdB), found in Acidaminococcus fermentans (strain ATCC 25085 / DSM 20731 / CCUG 9996 / CIP 106432 / VR4).